The following is a 170-amino-acid chain: RNA polymerase sigma factor TcsR (170 aa).

A sigma-70 factor domain-4 region spans residues 122–169; sequence IKDLTQNEKNILRKIYLHGLRESEISRELNISRQAVNKTHLRALEKLK. The H-T-H motif DNA-binding region spans 143 to 162; the sequence is ESEISRELNISRQAVNKTHL.

This sequence belongs to the sigma-70 factor family.

Functionally, sigma factors are initiation factors that promote the attachment of RNA polymerase to specific initiation sites and are then released. Transcriptional regulator specifically required to activate expression of the toxin gene locus, composed of tcsL and tcdE/utxA. The chain is RNA polymerase sigma factor TcsR from Paraclostridium sordellii (strain ATCC 9714 / DSM 2141 / JCM 3814 / LMG 15708 / NCIMB 10717 / 211) (Clostridium sordellii).